A 97-amino-acid polypeptide reads, in one-letter code: uncharacterized protein (97 aa).

The interval 58–97 is disordered; it reads SLLLPRTVQTGGTEREKPGPGQRKRGAHCSACKRSSTRPS.

This is an uncharacterized protein from Homo sapiens (Human).